A 260-amino-acid chain; its full sequence is Phosphate import ATP-binding protein PstB (260 aa).

The region spanning 14–255 (VQVKNLAFYY…PRNKQTEDYI (242 aa)) is the ABC transporter domain. 46–53 (GPSGCGKS) is an ATP binding site.

It belongs to the ABC transporter superfamily. Phosphate importer (TC 3.A.1.7) family. In terms of assembly, the complex is composed of two ATP-binding proteins (PstB), two transmembrane proteins (PstC and PstA) and a solute-binding protein (PstS).

Its subcellular location is the cell inner membrane. The catalysed reaction is phosphate(out) + ATP + H2O = ADP + 2 phosphate(in) + H(+). In terms of biological role, part of the ABC transporter complex PstSACB involved in phosphate import. Responsible for energy coupling to the transport system. The protein is Phosphate import ATP-binding protein PstB of Syntrophotalea carbinolica (strain DSM 2380 / NBRC 103641 / GraBd1) (Pelobacter carbinolicus).